The primary structure comprises 312 residues: DNA-directed RNA polymerase subunit alpha (312 aa).

The tract at residues 1-226 (MIEFEKPIIT…EHLNLFTDLT (226 aa)) is alpha N-terminal domain (alpha-NTD). The segment at 243-312 (DEKVLDRTIE…DLGLGLKNDK (70 aa)) is alpha C-terminal domain (alpha-CTD).

This sequence belongs to the RNA polymerase alpha chain family. Homodimer. The RNAP catalytic core consists of 2 alpha, 1 beta, 1 beta' and 1 omega subunit. When a sigma factor is associated with the core the holoenzyme is formed, which can initiate transcription.

The catalysed reaction is RNA(n) + a ribonucleoside 5'-triphosphate = RNA(n+1) + diphosphate. In terms of biological role, DNA-dependent RNA polymerase catalyzes the transcription of DNA into RNA using the four ribonucleoside triphosphates as substrates. The polypeptide is DNA-directed RNA polymerase subunit alpha (Streptococcus pyogenes serotype M1).